Consider the following 733-residue polypeptide: Hexamerin (733 aa).

An N-terminal signal peptide occupies residues 1 to 17 (MKTALVLILATATLAVA). 3 N-linked (GlcNAc...) asparagine glycosylation sites follow: Asn-199, Asn-234, and Asn-431.

This sequence belongs to the hemocyanin family. Homohexamer.

The protein localises to the secreted. Its subcellular location is the extracellular space. In terms of biological role, larval storage protein (LSP) which may serve as a store of amino acids for synthesis of adult proteins. The protein is Hexamerin of Blaberus discoidalis (Tropical cockroach).